The following is a 639-amino-acid chain: Zinc finger protein ZIC 5 (639 aa).

4 disordered regions span residues 113–171, 189–251, 323–355, and 379–409; these read PCGG…GHSR, HGAP…GHPH, PGPH…HLPG, and PDEL…PCSK. Residues 124-150 are compositionally biased toward pro residues; sequence SAPPPPAPPLPPTPSPPPPPPPPPPPA. Composition is skewed to pro residues over residues 331–343 and 385–401; these read APPP…PAPA and LPPP…PPPA. The C2H2-type 1; atypical zinc finger occupies 434 to 461; it reads HVCFWEDCPREGKPFKAKYKLINHIRVH. 3 consecutive C2H2-type zinc fingers follow at residues 467–491, 497–521, and 527–551; these read FPCP…KRTH, FKCE…SHVH, and YYCK…MKIH. A disordered region spans residues 548–568; sequence MKIHCKSPPPSPGPLGYSSVG. A phosphoserine mark is found at serine 554, serine 558, and serine 576. The interval 607 to 639 is disordered; that stretch reads APSHLHTPSSNGTTSETEDEEIYGNPEVVRTIH. The segment covering 612–621 has biased composition (polar residues); it reads HTPSSNGTTS.

It belongs to the GLI C2H2-type zinc-finger protein family.

The protein localises to the nucleus. Essential for neural crest development, converting cells from an epidermal fate to a neural crest cell fate. Binds to DNA. The protein is Zinc finger protein ZIC 5 (ZIC5) of Homo sapiens (Human).